Consider the following 206-residue polypeptide: Large ribosomal subunit protein uL4 (206 aa).

The protein belongs to the universal ribosomal protein uL4 family. In terms of assembly, part of the 50S ribosomal subunit.

One of the primary rRNA binding proteins, this protein initially binds near the 5'-end of the 23S rRNA. It is important during the early stages of 50S assembly. It makes multiple contacts with different domains of the 23S rRNA in the assembled 50S subunit and ribosome. Its function is as follows. Forms part of the polypeptide exit tunnel. In Bradyrhizobium sp. (strain BTAi1 / ATCC BAA-1182), this protein is Large ribosomal subunit protein uL4.